We begin with the raw amino-acid sequence, 396 residues long: Cytochrome P450 121 (396 aa).

Residue C345 participates in heme binding.

It belongs to the cytochrome P450 family. It depends on heme as a cofactor.

It localises to the cytoplasm. This Mycobacterium bovis (strain ATCC BAA-935 / AF2122/97) protein is Cytochrome P450 121 (cyp121).